Here is a 283-residue protein sequence, read N- to C-terminus: Pantothenate synthetase (283 aa).

Position 30–37 (30–37) interacts with ATP; it reads MGYYHAGH. H37 functions as the Proton donor in the catalytic mechanism. Q61 is a binding site for (R)-pantoate. Q61 is a beta-alanine binding site. 147–150 contacts ATP; the sequence is GQKD. Q153 is a (R)-pantoate binding site. ATP-binding positions include V176 and 184–187; that span reads MSSR.

Belongs to the pantothenate synthetase family. Homodimer.

It localises to the cytoplasm. The enzyme catalyses (R)-pantoate + beta-alanine + ATP = (R)-pantothenate + AMP + diphosphate + H(+). The protein operates within cofactor biosynthesis; (R)-pantothenate biosynthesis; (R)-pantothenate from (R)-pantoate and beta-alanine: step 1/1. Its function is as follows. Catalyzes the condensation of pantoate with beta-alanine in an ATP-dependent reaction via a pantoyl-adenylate intermediate. The polypeptide is Pantothenate synthetase (Nitratidesulfovibrio vulgaris (strain ATCC 29579 / DSM 644 / CCUG 34227 / NCIMB 8303 / VKM B-1760 / Hildenborough) (Desulfovibrio vulgaris)).